The primary structure comprises 347 residues: UPF0284 protein M164_0030 (347 aa).

It belongs to the UPF0284 family.

This is UPF0284 protein M164_0030 from Saccharolobus islandicus (strain M.16.4 / Kamchatka #3) (Sulfolobus islandicus).